Reading from the N-terminus, the 125-residue chain is Snaclec botrocetin subunit beta (125 aa).

3 disulfides stabilise this stretch: Cys2-Cys13, Cys30-Cys121, and Cys98-Cys113. Residues 9 to 122 (YEGHCYRFFK…CTRFKNFVCE (114 aa)) form the C-type lectin domain.

The protein belongs to the snaclec family. Heterodimer of subunits alpha and beta; disulfide-linked. Botrocetin and vWF form a soluble complex. As to expression, expressed by the venom gland.

Its subcellular location is the secreted. In terms of biological role, snaclec that binds to von Willebrand factor (VWF) and induces its interaction with GPIbalpha (GP1BA) (via the vWF A1 domain), resulting in platelet aggregation. In Bothrops jararaca (Jararaca), this protein is Snaclec botrocetin subunit beta.